A 105-amino-acid chain; its full sequence is Small ribosomal subunit protein bS18 (105 aa).

Positions 1-10 (MAEETNQQAP) are enriched in polar residues. The segment at 1 to 34 (MAEETNQQAPESGASSSQPTSRPSGPRGGSGGRK) is disordered. Low complexity predominate over residues 12-25 (SGASSSQPTSRPSG).

Belongs to the bacterial ribosomal protein bS18 family. Part of the 30S ribosomal subunit. Forms a tight heterodimer with protein bS6.

In terms of biological role, binds as a heterodimer with protein bS6 to the central domain of the 16S rRNA, where it helps stabilize the platform of the 30S subunit. The sequence is that of Small ribosomal subunit protein bS18 from Acidobacterium capsulatum (strain ATCC 51196 / DSM 11244 / BCRC 80197 / JCM 7670 / NBRC 15755 / NCIMB 13165 / 161).